The chain runs to 152 residues: SsrA-binding protein (152 aa).

The protein belongs to the SmpB family.

It localises to the cytoplasm. Its function is as follows. Required for rescue of stalled ribosomes mediated by trans-translation. Binds to transfer-messenger RNA (tmRNA), required for stable association of tmRNA with ribosomes. tmRNA and SmpB together mimic tRNA shape, replacing the anticodon stem-loop with SmpB. tmRNA is encoded by the ssrA gene; the 2 termini fold to resemble tRNA(Ala) and it encodes a 'tag peptide', a short internal open reading frame. During trans-translation Ala-aminoacylated tmRNA acts like a tRNA, entering the A-site of stalled ribosomes, displacing the stalled mRNA. The ribosome then switches to translate the ORF on the tmRNA; the nascent peptide is terminated with the 'tag peptide' encoded by the tmRNA and targeted for degradation. The ribosome is freed to recommence translation, which seems to be the essential function of trans-translation. The protein is SsrA-binding protein of Helicobacter pylori (strain Shi470).